A 116-amino-acid polypeptide reads, in one-letter code: L-amino-acid oxidase BjussuLAAO-II (116 aa).

FAD is bound at residue 42 to 45 (GPMR). Substrate contacts are provided by arginine 45 and histidine 78.

It belongs to the flavin monoamine oxidase family. FIG1 subfamily. In terms of assembly, homodimer; non-covalently linked. FAD is required as a cofactor. Post-translationally, glycosylated. As to expression, expressed by the venom gland.

Its subcellular location is the secreted. The catalysed reaction is an L-alpha-amino acid + O2 + H2O = a 2-oxocarboxylate + H2O2 + NH4(+). It catalyses the reaction L-leucine + O2 + H2O = 4-methyl-2-oxopentanoate + H2O2 + NH4(+). The enzyme catalyses L-phenylalanine + O2 + H2O = 3-phenylpyruvate + H2O2 + NH4(+). It carries out the reaction L-methionine + O2 + H2O = 4-methylsulfanyl-2-oxobutanoate + H2O2 + NH4(+). The catalysed reaction is L-isoleucine + O2 + H2O = (S)-3-methyl-2-oxopentanoate + H2O2 + NH4(+). It catalyses the reaction L-histidine + O2 + H2O = 3-(imidazol-5-yl)pyruvate + H2O2 + NH4(+). The enzyme catalyses L-tyrosine + O2 + H2O = 3-(4-hydroxyphenyl)pyruvate + H2O2 + NH4(+). It carries out the reaction L-tryptophan + O2 + H2O = indole-3-pyruvate + H2O2 + NH4(+). Its enzymatic activities is reduced by the presence of Zn(2+), Al(3+), Cu(2+), Na(+) or Ni(2+) salts. Its function is as follows. Catalyzes an oxidative deamination of predominantly hydrophobic and aromatic L-amino acids, thus producing hydrogen peroxide that may contribute to the diverse toxic effects of this enzyme. Shows very high enzymatic activity on L-Met and L-Leu, high activity on L-Ile, L-Phe and L-Tyr and moderate activity on L-His. Exhibits diverse biological activities, such as hemorrhage, hemolysis, edema, apoptosis of vascular endothelial cells or tumor cell lines, and antibacterial, as well as regulation of platelet aggregation. Effects of snake L-amino oxidases on platelets are controversial, since they either induce aggregation or inhibit agonist-induced aggregation. These different effects are probably due to different experimental conditions. In vitro, has a strong antiprotozoal effect against Leishmania amazonensis (IC(50)=4.56 ug/mL) and Trypanosoma cruzi (IC(50)=4.85 ug/mL). It also causes cell death and DNA damage in hepatocarcinoma cells (HepG2) in vitro by inducing oxidative stress. It exerts cytotoxicity towards colorectal adenocarcinomahuman cells (Caco-2) by acting on multiple intracellular targets. It diminishes cell viability by decreasing mitochondrial activity, the activity of acid phosphatases, and lysosomal function. In addition, it increases intracellular levels of reactive oxygen species and DNA damage, it elevates the expression of the pro-inflammatory cytokine genes TNF and IL6, and lowers the expression of the apoptotic-related genes. Also induces cytotoxicity (IC(50)=1.80 ug/mL) and apoptosis in MCF-7 cells (a human breast adeno-carcinoma cell line) by activating the intrinsic and extrinsic apoptosis pathways, but are not cytotoxic towards MCF-10A cells (a non-tumorigenic human breast epithelial cell line). In Bothrops jararacussu (Jararacussu), this protein is L-amino-acid oxidase BjussuLAAO-II.